We begin with the raw amino-acid sequence, 255 residues long: Ribosomal RNA small subunit methyltransferase A (255 aa).

S-adenosyl-L-methionine is bound by residues N12, L14, G39, E60, D84, and N102.

This sequence belongs to the class I-like SAM-binding methyltransferase superfamily. rRNA adenine N(6)-methyltransferase family. RsmA subfamily.

Its subcellular location is the cytoplasm. The enzyme catalyses adenosine(1518)/adenosine(1519) in 16S rRNA + 4 S-adenosyl-L-methionine = N(6)-dimethyladenosine(1518)/N(6)-dimethyladenosine(1519) in 16S rRNA + 4 S-adenosyl-L-homocysteine + 4 H(+). Its function is as follows. Specifically dimethylates two adjacent adenosines (A1518 and A1519) in the loop of a conserved hairpin near the 3'-end of 16S rRNA in the 30S particle. May play a critical role in biogenesis of 30S subunits. The polypeptide is Ribosomal RNA small subunit methyltransferase A (Methylobacillus flagellatus (strain ATCC 51484 / DSM 6875 / VKM B-1610 / KT)).